The primary structure comprises 393 residues: NAD(P)H-quinone oxidoreductase subunit H, chloroplastic (393 aa).

The protein belongs to the complex I 49 kDa subunit family. As to quaternary structure, NDH is composed of at least 16 different subunits, 5 of which are encoded in the nucleus.

It is found in the plastid. It localises to the chloroplast thylakoid membrane. The enzyme catalyses a plastoquinone + NADH + (n+1) H(+)(in) = a plastoquinol + NAD(+) + n H(+)(out). It catalyses the reaction a plastoquinone + NADPH + (n+1) H(+)(in) = a plastoquinol + NADP(+) + n H(+)(out). NDH shuttles electrons from NAD(P)H:plastoquinone, via FMN and iron-sulfur (Fe-S) centers, to quinones in the photosynthetic chain and possibly in a chloroplast respiratory chain. The immediate electron acceptor for the enzyme in this species is believed to be plastoquinone. Couples the redox reaction to proton translocation, and thus conserves the redox energy in a proton gradient. In Cicer arietinum (Chickpea), this protein is NAD(P)H-quinone oxidoreductase subunit H, chloroplastic.